The following is a 240-amino-acid chain: MAENVLSAQKRTEQGKGPARRLRQQGLIPAVVYGGKREPTHVALDPATLLKAIETPHKFNTLLELQVDGASKHVLFKDYTVDPVTRKLLHADFLEVSMDQPVKVNVPVVTVGRAAGVAEGGILSVATHAIVVEALPNKIPVRIEVDVTELKIGRSLHVSELKAPEGCKFKFQTDYVVVFVAVPEKEEVAAPVAAAVPGAAPAEGAAPAAGAAAPAGGAAPAAGAAPAKGGEAKGGDKAKK.

Disordered stretches follow at residues 1–21 (MAEN…PARR) and 204–240 (GAAP…KAKK). The span at 204 to 229 (GAAPAAGAAAPAGGAAPAAGAAPAKG) shows a compositional bias: low complexity. Residues 230 to 240 (GEAKGGDKAKK) show a composition bias toward basic and acidic residues.

The protein belongs to the bacterial ribosomal protein bL25 family. CTC subfamily. As to quaternary structure, part of the 50S ribosomal subunit; part of the 5S rRNA/L5/L18/L25 subcomplex. Contacts the 5S rRNA. Binds to the 5S rRNA independently of L5 and L18.

Functionally, this is one of the proteins that binds to the 5S RNA in the ribosome where it forms part of the central protuberance. The sequence is that of Large ribosomal subunit protein bL25 from Anaeromyxobacter dehalogenans (strain 2CP-1 / ATCC BAA-258).